The chain runs to 119 residues: NADH dehydrogenase [ubiquinone] 1 subunit C2 (119 aa).

Residues 56 to 75 (GLHRQLLYITAFFFAGYYLV) form a helical membrane-spanning segment.

This sequence belongs to the complex I NDUFC2 subunit family. Complex I is composed of 45 different subunits. Interacts with TMEM242.

The protein resides in the mitochondrion inner membrane. Its function is as follows. Accessory subunit of the mitochondrial membrane respiratory chain NADH dehydrogenase (Complex I), that is believed not to be involved in catalysis but required for the complex assembly. Complex I functions in the transfer of electrons from NADH to the respiratory chain. The immediate electron acceptor for the enzyme is believed to be ubiquinone. The chain is NADH dehydrogenase [ubiquinone] 1 subunit C2 from Pan troglodytes (Chimpanzee).